The sequence spans 202 residues: Peroxynitrite isomerase (202 aa).

Positions Gly-21 to Gly-27 match the GXWXGXG motif. Position 193 (His-193) interacts with heme b.

Belongs to the nitrobindin family. Homodimer. The cofactor is heme b.

The catalysed reaction is peroxynitrite = nitrate. Its pathway is nitrogen metabolism. In terms of biological role, heme-binding protein able to scavenge peroxynitrite and to protect free L-tyrosine against peroxynitrite-mediated nitration, by acting as a peroxynitrite isomerase that converts peroxynitrite to nitrate. Therefore, this protein likely plays a role in peroxynitrite sensing and in the detoxification of reactive nitrogen and oxygen species (RNS and ROS, respectively). Is able to bind nitric oxide (NO) in vitro, but may act as a sensor of peroxynitrite levels in vivo. The protein is Peroxynitrite isomerase of Pseudarthrobacter chlorophenolicus (strain ATCC 700700 / DSM 12829 / CIP 107037 / JCM 12360 / KCTC 9906 / NCIMB 13794 / A6) (Arthrobacter chlorophenolicus).